The chain runs to 217 residues: C-type lectin domain family 2 member I (217 aa).

Residues 1 to 53 lie on the Cytoplasmic side of the membrane; sequence MPDCLETGEKLFVHNMNAQCVQKPEEGNGPLGTGGKIVQGKCFRIISTVSPVK. The helical; Signal-anchor for type II membrane protein transmembrane segment at 54 to 74 threads the bilayer; it reads LYCCYGVIMVLTVAVIALSVA. Over 75-217 the chain is Extracellular; the sequence is LSTKKTEQII…YNLHCQTPPV (143 aa). A disulfide bond links Cys-92 and Cys-103. The 105-residue stretch at 99–203 folds into the C-type lectin domain; sequence VGNKCFYFSG…SYINRMWICS (105 aa). Asn-112 carries an N-linked (GlcNAc...) asparagine glycan. The cysteines at positions 120 and 202 are disulfide-linked.

Detected in osteoblasts, growth plate chondrocytes and skeletal muscle overlying the bone (at protein level). Detected in spleen, B-cells, dendritic cells, thymus, and in IL2-activated natural killer cells.

The protein resides in the cell membrane. Functionally, inhibits osteoclast formation. Receptor for KLRB1F. Enhances T-cell activation. Plays a role in splenocyte activation, T-cell responses and IL-2 production. This chain is C-type lectin domain family 2 member I (Clec2i), found in Mus musculus (Mouse).